Reading from the N-terminus, the 665-residue chain is mRNA cleavage and polyadenylation factor CLP1 (665 aa).

ATP contacts are provided by residues K91 and 195-200; that span reads SAGKTS. 2 disordered regions span residues 218–283 and 593–615; these read VKEG…SQAK and PPPR…HDYE. Basic and acidic residues-rich tracts occupy residues 219-238 and 598-614; these read KEGD…EIHP and QSKD…HHDY.

This sequence belongs to the Clp1 family. Clp1 subfamily. Component of a pre-mRNA cleavage factor complex. Interacts directly with PCF11.

Its subcellular location is the nucleus. Functionally, required for endonucleolytic cleavage during polyadenylation-dependent pre-mRNA 3'-end formation. The protein is mRNA cleavage and polyadenylation factor CLP1 of Malassezia globosa (strain ATCC MYA-4612 / CBS 7966) (Dandruff-associated fungus).